Here is a 455-residue protein sequence, read N- to C-terminus: Chromosomal replication initiator protein DnaA (455 aa).

The interval 1-75 (MDTNNNIEKE…EILSQNKVGM (75 aa)) is domain I, interacts with DnaA modulators. The segment at 75–106 (MHLAHSVDVRIEVAPKIQINAQANINYKAIKT) is domain II. The segment at 107–321 (SVKDSYTFEN…GAIIKISVNA (215 aa)) is domain III, AAA+ region. Positions 151, 153, 154, and 155 each coordinate ATP. Positions 322-455 (NLMNAPIDLN…DKKTAFNSSE (134 aa)) are domain IV, binds dsDNA.

It belongs to the DnaA family. As to quaternary structure, oligomerizes as a right-handed, spiral filament on DNA at oriC.

The protein localises to the cytoplasm. Its function is as follows. Plays an essential role in the initiation and regulation of chromosomal replication. ATP-DnaA binds to the origin of replication (oriC) to initiate formation of the DNA replication initiation complex once per cell cycle. Binds the DnaA box (a 9 base pair repeat at the origin) and separates the double-stranded (ds)DNA. Forms a right-handed helical filament on oriC DNA; dsDNA binds to the exterior of the filament while single-stranded (ss)DNA is stabiized in the filament's interior. The ATP-DnaA-oriC complex binds and stabilizes one strand of the AT-rich DNA unwinding element (DUE), permitting loading of DNA polymerase. After initiation quickly degrades to an ADP-DnaA complex that is not apt for DNA replication. Binds acidic phospholipids. The chain is Chromosomal replication initiator protein DnaA from Helicobacter pylori (strain P12).